We begin with the raw amino-acid sequence, 687 residues long: Glycine--tRNA ligase beta subunit (687 aa).

The protein belongs to the class-II aminoacyl-tRNA synthetase family. In terms of assembly, tetramer of two alpha and two beta subunits.

The protein localises to the cytoplasm. It carries out the reaction tRNA(Gly) + glycine + ATP = glycyl-tRNA(Gly) + AMP + diphosphate. The protein is Glycine--tRNA ligase beta subunit of Neisseria meningitidis serogroup B (strain ATCC BAA-335 / MC58).